The chain runs to 191 residues: 3-isopropylmalate dehydratase small subunit (191 aa).

Belongs to the LeuD family. LeuD type 1 subfamily. As to quaternary structure, heterodimer of LeuC and LeuD.

The enzyme catalyses (2R,3S)-3-isopropylmalate = (2S)-2-isopropylmalate. The protein operates within amino-acid biosynthesis; L-leucine biosynthesis; L-leucine from 3-methyl-2-oxobutanoate: step 2/4. In terms of biological role, catalyzes the isomerization between 2-isopropylmalate and 3-isopropylmalate, via the formation of 2-isopropylmaleate. This is 3-isopropylmalate dehydratase small subunit from Anaeromyxobacter sp. (strain K).